Consider the following 305-residue polypeptide: uncharacterized protein (305 aa).

Residues 208–236 form a disordered region; the sequence is SYAQSPAVKKKKWRHSGGKKNNPRENHID. Over residues 215–225 the composition is skewed to basic residues; it reads VKKKKWRHSGG.

This is an uncharacterized protein from Bacillus subtilis (strain 168).